The following is a 95-amino-acid chain: Co-chaperonin GroES (95 aa).

Belongs to the GroES chaperonin family. In terms of assembly, heptamer of 7 subunits arranged in a ring. Interacts with the chaperonin GroEL.

The protein localises to the cytoplasm. Functionally, together with the chaperonin GroEL, plays an essential role in assisting protein folding. The GroEL-GroES system forms a nano-cage that allows encapsulation of the non-native substrate proteins and provides a physical environment optimized to promote and accelerate protein folding. GroES binds to the apical surface of the GroEL ring, thereby capping the opening of the GroEL channel. This chain is Co-chaperonin GroES, found in Desulfatibacillum aliphaticivorans.